The chain runs to 491 residues: Conidiogenone synthase PchP450 (491 aa).

A helical membrane pass occupies residues 2–22; it reads LLLWFGFFSFVCGLVIYRLQF. Cysteine 430 serves as a coordination point for heme.

This sequence belongs to the cytochrome P450 family. It depends on heme as a cofactor.

It localises to the membrane. Its pathway is secondary metabolite biosynthesis; terpenoid biosynthesis. In terms of biological role, cytochrome P450 monooxygenase; part of the gene cluster that mediates the biosynthesis of conidiogenone, a diterpene known to induce the conidiation. The bifunctional terpene synthase PrDS converts isopentenyl diphosphate (IPP) and dimethylallyl diphosphate (DMAPP) into deoxyconidiogenol. The C-terminal prenyltransferase (PT) domain of PrDS catalyzes formation of GGPP, whereas the N-terminal terpene cyclase (TC) domain catalyzes the cyclization of GGPP into deoxyconidiogenol. The cytochrome P450 monooxygenase PrP450 then catalyzes two rounds of oxidation to furnish conidiogenone. This chain is Conidiogenone synthase PchP450, found in Penicillium rubens (strain ATCC 28089 / DSM 1075 / NRRL 1951 / Wisconsin 54-1255) (Penicillium chrysogenum).